We begin with the raw amino-acid sequence, 473 residues long: Ribulose bisphosphate carboxylase large chain 3 (473 aa).

Substrate contacts are provided by Asn-116 and Thr-166. The active-site Proton acceptor is Lys-168. Residue Lys-170 participates in substrate binding. Mg(2+) is bound by residues Lys-194, Asp-196, and Glu-197. At Lys-194 the chain carries N6-carboxylysine. His-287 acts as the Proton acceptor in catalysis. Residues Arg-288, His-320, and Ser-372 each coordinate substrate.

The protein belongs to the RuBisCO large chain family. Type I subfamily. Heterohexadecamer of 8 large chains and 8 small chains. Mg(2+) serves as cofactor.

It carries out the reaction 2 (2R)-3-phosphoglycerate + 2 H(+) = D-ribulose 1,5-bisphosphate + CO2 + H2O. It catalyses the reaction D-ribulose 1,5-bisphosphate + O2 = 2-phosphoglycolate + (2R)-3-phosphoglycerate + 2 H(+). Functionally, ruBisCO catalyzes two reactions: the carboxylation of D-ribulose 1,5-bisphosphate, the primary event in carbon dioxide fixation, as well as the oxidative fragmentation of the pentose substrate. Both reactions occur simultaneously and in competition at the same active site. The polypeptide is Ribulose bisphosphate carboxylase large chain 3 (Nitrobacter hamburgensis (strain DSM 10229 / NCIMB 13809 / X14)).